The sequence spans 233 residues: Adenosine 5'-phosphosulfate reductase (233 aa).

Residues Cys-120, Cys-121, Cys-203, and Cys-206 each coordinate [4Fe-4S] cluster. The active-site Nucleophile; cysteine thiosulfonate intermediate is the Cys-229.

This sequence belongs to the PAPS reductase family. CysH subfamily. [4Fe-4S] cluster is required as a cofactor.

Its subcellular location is the cytoplasm. The enzyme catalyses [thioredoxin]-disulfide + sulfite + AMP + 2 H(+) = adenosine 5'-phosphosulfate + [thioredoxin]-dithiol. It participates in sulfur metabolism; hydrogen sulfide biosynthesis; sulfite from sulfate. In terms of biological role, catalyzes the formation of sulfite from adenosine 5'-phosphosulfate (APS) using thioredoxin as an electron donor. The polypeptide is Adenosine 5'-phosphosulfate reductase (Bacillus pumilus (strain SAFR-032)).